The following is a 327-amino-acid chain: Microtubule-associated protein RP/EB family member 2 (327 aa).

The interval 1–21 (MPGPTQTLSPNGENNNDIIQD) is disordered. At Pro-2 the chain carries N-acetylalanine. Phosphoserine is present on Ser-9. Positions 57 to 159 (TMSRHDIIAW…FIQWFKKFYD (103 aa)) constitute a Calponin-homology (CH) domain. At Tyr-167 the chain carries Phosphotyrosine. Disordered regions lie at residues 171-240 (EARQ…DKDL) and 299-327 (ASEE…QEEY). Residues 187 to 327 (QIFNLPKKSH…EQQPPQQEEY (141 aa)) form a DCTN1-binding region. A compositionally biased stretch (low complexity) spans 200 to 234 (SPTAGAAKSSPAAKPGSTPSRPSSAKRASSSGSAS). Phosphoserine is present on residues Ser-219 and Ser-236. One can recognise an EB1 C-terminal domain in the interval 236–306 (SDKDLETQVI…LYASEEHEGH (71 aa)). Residues 259–302 (EGVEKERDFYFGKLREIELLCQEHGQENDDLVQRLMDILYASEE) form an APC-binding region. Positions 300–317 (SEEHEGHTEEPEAEEQAH) are enriched in basic and acidic residues. Residues 318 to 327 (EQQPPQQEEY) are compositionally biased toward low complexity.

It belongs to the MAPRE family. As to quaternary structure, interacts with DCTN1. Interacts with APC (via C-terminal). Interacts with monomeric and polymerized tubulin. Interacts with SLAIN1. Interacts (via the N-terminal region) with BAG1. Interacts with ASB14. Interacts with HAX1; this interaction is essential for epidermal cell migration. Post-translationally, phosphorylated at Ser-236 by CK2 leading to enhanced cell adhesion. Phosphorylated by CDK1 and AURKB during mitosis reduces the binding affinity of MAPRE2 for microtubules. In terms of processing, ubiquitinated in an ASB14-dependent manner; leading to proteasomal degradation. Expressed in different tumor cell lines. Up-regulated in activated B- and T-lymphocytes.

It is found in the cytoplasm. Its subcellular location is the cytoskeleton. Adapter protein that is involved in microtubule polymerization, and spindle function by stabilizing microtubules and anchoring them at centrosomes. Therefore, ensures mitotic progression and genome stability. Acts as a central regulator of microtubule reorganization in apico-basal epithelial differentiation. Plays a role during oocyte meiosis by regulating microtubule dynamics. Participates in neurite growth by interacting with plexin B3/PLXNB3 and microtubule reorganization during apico-basal epithelial differentiation. Also plays an essential role for cell migration and focal adhesion dynamics. Mechanistically, recruits HAX1 to microtubules in order to regulate focal adhesion dynamics. The polypeptide is Microtubule-associated protein RP/EB family member 2 (MAPRE2) (Homo sapiens (Human)).